A 144-amino-acid polypeptide reads, in one-letter code: Large ribosomal subunit protein uL11 (144 aa).

Belongs to the universal ribosomal protein uL11 family. As to quaternary structure, part of the ribosomal stalk of the 50S ribosomal subunit. Interacts with L10 and the large rRNA to form the base of the stalk. L10 forms an elongated spine to which L12 dimers bind in a sequential fashion forming a multimeric L10(L12)X complex. In terms of processing, one or more lysine residues are methylated.

Functionally, forms part of the ribosomal stalk which helps the ribosome interact with GTP-bound translation factors. This Francisella tularensis subsp. holarctica (strain OSU18) protein is Large ribosomal subunit protein uL11.